The sequence spans 114 residues: Non-specific lipid-transfer protein 2 (114 aa).

An N-terminal signal peptide occupies residues 1-23 (MEMVNKIACFVLLCMVVVAPHAE). Cystine bridges form between cysteine 27-cysteine 73, cysteine 37-cysteine 50, cysteine 51-cysteine 96, and cysteine 71-cysteine 110.

The protein belongs to the plant LTP family.

Functionally, plant non-specific lipid-transfer proteins transfer phospholipids as well as galactolipids across membranes. May play a role in wax or cutin deposition in the cell walls of expanding epidermal cells and certain secretory tissues. This chain is Non-specific lipid-transfer protein 2, found in Solanum chilense (Tomato).